A 387-amino-acid chain; its full sequence is V-set and immunoglobulin domain-containing protein 1 (387 aa).

A signal peptide spans M1–V21. Positions V22–L132 constitute an Ig-like V-type domain. The Extracellular segment spans residues V22 to E232. N-linked (GlcNAc...) asparagine glycosylation is found at N32 and N38. Cysteines 43 and 116 form a disulfide. 3 N-linked (GlcNAc...) asparagine glycosylation sites follow: N133, N200, and N219. The Ig-like C2-type domain occupies P140–T227. An intrachain disulfide couples C161 to C211. A helical membrane pass occupies residues V233–V253. At V254 to A387 the chain is on the cytoplasmic side. Residues K266–A387 form a disordered region. The segment covering P284–A296 has biased composition (basic and acidic residues). The span at L299–H308 shows a compositional bias: polar residues. Residues T325 to G335 show a composition bias toward pro residues. Residues L344 to S368 are compositionally biased toward acidic residues.

Highly N-glycosylated. Appears not to contain significant amounts of O-linked carbohydrates or sialic acid in its sugar moieties. As to expression, detected only in stomach mucosa and testis, and to a much lesser level in pancreas (at protein level). Detected in gastric cancers (31%), esophageal carcinomas (50%) and ovarian cancers (23%).

The protein resides in the membrane. This Homo sapiens (Human) protein is V-set and immunoglobulin domain-containing protein 1 (VSIG1).